Consider the following 345-residue polypeptide: D-fructose 1,6-bisphosphatase class 2/sedoheptulose 1,7-bisphosphatase (345 aa).

4 residues coordinate Mn(2+): aspartate 33, glutamate 57, aspartate 97, and glutamate 100. Substrate contacts are provided by residues 100-102, tyrosine 131, 176-178, and 198-200; these read EGT, RPR, and DGD. Residue glutamate 225 participates in Mn(2+) binding.

This sequence belongs to the FBPase class 2 family. Homotetramer. Mn(2+) serves as cofactor.

It catalyses the reaction beta-D-fructose 1,6-bisphosphate + H2O = beta-D-fructose 6-phosphate + phosphate. It carries out the reaction D-sedoheptulose 1,7-bisphosphate + H2O = D-sedoheptulose 7-phosphate + phosphate. It functions in the pathway carbohydrate biosynthesis; Calvin cycle. Functionally, catalyzes the hydrolysis of fructose 1,6-bisphosphate (Fru 1,6-P2) and sedoheptulose 1,7-bisphosphate (Sed 1,7-P2) to fructose 6-phosphate and sedoheptulose 7-phosphate, respectively. The protein is D-fructose 1,6-bisphosphatase class 2/sedoheptulose 1,7-bisphosphatase of Trichodesmium erythraeum (strain IMS101).